The sequence spans 301 residues: Dihydroorotate dehydrogenase B (NAD(+)), catalytic subunit (301 aa).

Residues Lys44, 68–72 (NAMGL), and Asn122 contribute to the substrate site. 44 to 45 (KS) provides a ligand contact to FMN. Asn122 is an FMN binding site. Catalysis depends on Cys125, which acts as the Nucleophile. FMN contacts are provided by Lys160 and Ile186. 187–188 (NT) contributes to the substrate binding site. Residues Gly212, 238–239 (GG), and 260–261 (GS) each bind FMN.

This sequence belongs to the dihydroorotate dehydrogenase family. Type 1 subfamily. Heterotetramer of 2 PyrK and 2 PyrD type B subunits. Requires FMN as cofactor.

The protein localises to the cytoplasm. It carries out the reaction (S)-dihydroorotate + NAD(+) = orotate + NADH + H(+). It participates in pyrimidine metabolism; UMP biosynthesis via de novo pathway; orotate from (S)-dihydroorotate (NAD(+) route): step 1/1. Its function is as follows. Catalyzes the conversion of dihydroorotate to orotate with NAD(+) as electron acceptor. The sequence is that of Dihydroorotate dehydrogenase B (NAD(+)), catalytic subunit (pyrD) from Methanocella arvoryzae (strain DSM 22066 / NBRC 105507 / MRE50).